The primary structure comprises 1601 residues: PH and SEC7 domain-containing protein (1601 aa).

A mediates regulation of axon branching and microtubule organization region spans residues 1-340 (MSEELKVVLR…TGDLILNLSR (340 aa)). The 83-residue stretch at 6–88 (KVVLRRSEQH…LVTLELKRDP (83 aa)) folds into the PDZ domain. 7 disordered regions span residues 113–192 (NIYD…SSTK), 211–322 (TSPT…PAKA), 339–440 (SRTP…SLTN), 459–657 (LEED…SSSG), 737–780 (NSSL…SETA), 872–965 (QQQQ…LLSC), and 1040–1126 (QQLK…SDVE). Residues 118 to 128 (HSSSTNSSPNH) are compositionally biased toward polar residues. Residues 166 to 191 (ASGSTTTTTTATHTHSHSRNSSASST) show a composition bias toward low complexity. Polar residues predominate over residues 283–297 (QSLQHSNSYSGSPVT). Residues 300–311 (RFADREPEREPE) show a composition bias toward basic and acidic residues. The Microtubule elimination domain (MTED); Binds tubulin and blocks microtubule polymerization signature appears at 323–340 (PRFEAYMMTGDLILNLSR). Over residues 339–348 (SRTPQTSNPL) the composition is skewed to polar residues. A compositionally biased stretch (basic and acidic residues) spans 353-362 (KKIDSLRDSP). 3 stretches are compositionally biased toward low complexity: residues 382 to 399 (SSPT…TSSD), 409 to 424 (QKQQ…QQQQ), and 468 to 487 (QRQQ…YEYY). Residues 488–505 (QNEDELEEQEEVEEEREE) show a composition bias toward acidic residues. Residues 510-519 (YDITNIETYQ) are compositionally biased toward polar residues. Positions 526 to 557 (DDDDSDRQCLVDDDDDDDAYDDEENDAGDEDY) are enriched in acidic residues. Composition is skewed to polar residues over residues 558–567 (STNSLGSGSA) and 617–630 (TSFS…SLST). Positions 640–657 (SVPTSPEPSSLVPESSSG) are enriched in low complexity. Positions 737–747 (NSSLASNNNEG) are enriched in polar residues. Low complexity-rich tracts occupy residues 752–780 (NRSS…SETA), 872–942 (QQQQ…QQQQ), 949–965 (GGQV…LLSC), and 1040–1052 (QQLK…QQQQ). The tract at residues 894–1601 (SSSPQHSAVG…PTNRKEKKKK (708 aa)) is mediates association to the membrane and rescricts the microtubule-inhibiting activity to the cell cortex. Residues 1053–1071 (QRERERDRDRDREQSEHKV) are compositionally biased toward basic and acidic residues. The 167-residue stretch at 1125-1291 (VESLHSYHYS…KSLYQAIKTK (167 aa)) folds into the SEC7 domain. The PH domain maps to 1332 to 1445 (VEYKKGYVMR…WVETINYVCA (114 aa)). The segment at 1544 to 1601 (LELQAQQPSPASHEEEADTFPVGTTACTPPTPQSINQKDQQKEQQQQQPTNRKEKKKK) is disordered. Over residues 1568–1579 (TACTPPTPQSIN) the composition is skewed to polar residues.

This sequence belongs to the PSD family. As to quaternary structure, interacts (via MTED motif) with tubulin. Expressed in the head (at protein level).

The protein localises to the cell projection. It localises to the axon. Its subcellular location is the cytoplasm. It is found in the cell membrane. The protein resides in the cell cortex. Functionally, guanine nucleotide exchange factor for Arf6. Regulates axon growth and branching by inhibiting microtubule polymerisation at the cortex. Together with shot, promotes axonal microtubule bundle integrity. Required for normal ethanol-induced tolerance and preference. Probably by activating Arf6, counteracts ethanol-induced sedation. The polypeptide is PH and SEC7 domain-containing protein (Drosophila melanogaster (Fruit fly)).